Consider the following 400-residue polypeptide: Bifunctional enzyme IspD/IspF (400 aa).

The tract at residues 1 to 235 (MSLWTVLLAA…LAEAAAPPVP (235 aa)) is 2-C-methyl-D-erythritol 4-phosphate cytidylyltransferase. Positions 236-400 (VTGYGYDVHR…VALVSGWRRP (165 aa)) are 2-C-methyl-D-erythritol 2,4-cyclodiphosphate synthase. A divalent metal cation contacts are provided by aspartate 242 and histidine 244. Residues 242–244 (DVH) and 276–277 (HS) each bind 4-CDP-2-C-methyl-D-erythritol 2-phosphate. Histidine 284 is a binding site for a divalent metal cation. 4-CDP-2-C-methyl-D-erythritol 2-phosphate is bound by residues 298 to 300 (DIG), 303 to 307 (FPDSN), 374 to 377 (TTEE), and phenylalanine 381.

In the N-terminal section; belongs to the IspD/TarI cytidylyltransferase family. IspD subfamily. It in the C-terminal section; belongs to the IspF family. Requires a divalent metal cation as cofactor.

The catalysed reaction is 2-C-methyl-D-erythritol 4-phosphate + CTP + H(+) = 4-CDP-2-C-methyl-D-erythritol + diphosphate. It carries out the reaction 4-CDP-2-C-methyl-D-erythritol 2-phosphate = 2-C-methyl-D-erythritol 2,4-cyclic diphosphate + CMP. It participates in isoprenoid biosynthesis; isopentenyl diphosphate biosynthesis via DXP pathway; isopentenyl diphosphate from 1-deoxy-D-xylulose 5-phosphate: step 2/6. It functions in the pathway isoprenoid biosynthesis; isopentenyl diphosphate biosynthesis via DXP pathway; isopentenyl diphosphate from 1-deoxy-D-xylulose 5-phosphate: step 4/6. In terms of biological role, bifunctional enzyme that catalyzes the formation of 4-diphosphocytidyl-2-C-methyl-D-erythritol from CTP and 2-C-methyl-D-erythritol 4-phosphate (MEP) (IspD), and catalyzes the conversion of 4-diphosphocytidyl-2-C-methyl-D-erythritol 2-phosphate (CDP-ME2P) to 2-C-methyl-D-erythritol 2,4-cyclodiphosphate (ME-CPP) with a corresponding release of cytidine 5-monophosphate (CMP) (IspF). The protein is Bifunctional enzyme IspD/IspF of Solidesulfovibrio magneticus (strain ATCC 700980 / DSM 13731 / RS-1) (Desulfovibrio magneticus).